A 62-amino-acid chain; its full sequence is MLKCDICGKGPLAGYQYSHSHRKSIRKWKPNIKKVRAIVDGTPVRLHVCTKCLKAGKVQRAL.

The protein belongs to the bacterial ribosomal protein bL28 family.

The protein is Large ribosomal subunit protein bL28 of Thermoanaerobacter sp. (strain X514).